A 359-amino-acid chain; its full sequence is Histidinol-phosphate aminotransferase (359 aa).

At K217 the chain carries N6-(pyridoxal phosphate)lysine.

The protein belongs to the class-II pyridoxal-phosphate-dependent aminotransferase family. Histidinol-phosphate aminotransferase subfamily. Homodimer. Pyridoxal 5'-phosphate serves as cofactor.

The catalysed reaction is L-histidinol phosphate + 2-oxoglutarate = 3-(imidazol-4-yl)-2-oxopropyl phosphate + L-glutamate. It participates in amino-acid biosynthesis; L-histidine biosynthesis; L-histidine from 5-phospho-alpha-D-ribose 1-diphosphate: step 7/9. The protein is Histidinol-phosphate aminotransferase of Citrobacter koseri (strain ATCC BAA-895 / CDC 4225-83 / SGSC4696).